Consider the following 607-residue polypeptide: Zinc finger CCCH domain-containing protein 66 (607 aa).

ANK repeat units follow at residues 57-87 and 92-124; these read EERT…DVNR and DGAT…NPDS. Residues 161–178 show a composition bias toward acidic residues; sequence LNEVNGQEESEPEVEVEV. The disordered stretch occupies residues 161–193; sequence LNEVNGQEESEPEVEVEVEVSPPRGSERKEYPV. 2 consecutive C3H1-type zinc fingers follow at residues 254–276 and 284–308; these read PCPE…HGIF and QYRT…HKPE. Residues 342–363 form a disordered region; it reads ISPLPIGATTTPPLSPNGVSSP. Over residues 349–361 the composition is skewed to polar residues; the sequence is ATTTPPLSPNGVS.

The protein is Zinc finger CCCH domain-containing protein 66 of Arabidopsis thaliana (Mouse-ear cress).